The primary structure comprises 209 residues: uncharacterized protein (209 aa).

An N-terminal signal peptide occupies residues 1–17; sequence MKRLVTGLLALSLFLAA. Residues 17–105 are disordered; the sequence is ACGQDSDQQK…SNNQANNNQK (89 aa). Cysteine 18 is lipidated: N-palmitoyl cysteine. The S-diacylglycerol cysteine moiety is linked to residue cysteine 18. Residues 23–70 show a composition bias toward basic and acidic residues; sequence DQQKDSNKEKDDKAKTEQQDEKTNDSSKDKKDKKDDSKDVNKDNKDNS. A compositionally biased stretch (low complexity) spans 71–105; sequence ANDNQQQSNSNATNNDQNQTNNNQSSNNQANNNQK.

Its subcellular location is the cell membrane. This is an uncharacterized protein from Staphylococcus aureus (strain bovine RF122 / ET3-1).